We begin with the raw amino-acid sequence, 362 residues long: Adenosine kinase (362 aa).

Position 2 is an N-acetylalanine (Ala2). A Nuclear localization signal motif is present at residues 8 to 16 (PKPKKLKVE). Residue Asp35 coordinates adenosine. Ser49 is a Mg(2+) binding site. Tyr77 is subject to Phosphotyrosine. Residues Asp147 and Asn148 each contribute to the Mg(2+) site. Residue Gln306 participates in adenosine binding. The active-site Proton acceptor is the Asp317.

This sequence belongs to the carbohydrate kinase PfkB family. In terms of assembly, monomer. Mg(2+) serves as cofactor. In terms of tissue distribution, widely expressed. Highest level in placenta, liver, muscle and kidney.

The protein resides in the nucleus. Its subcellular location is the cytoplasm. The enzyme catalyses adenosine + ATP = AMP + ADP + H(+). Its pathway is purine metabolism; AMP biosynthesis via salvage pathway; AMP from adenosine: step 1/1. Its activity is regulated as follows. Activity is inhibited by 5-iodotubercidin and 5'-amino-5'-deoxyadenosine. Functionally, catalyzes the phosphorylation of the purine nucleoside adenosine at the 5' position in an ATP-dependent manner. Serves as a potential regulator of concentrations of extracellular adenosine and intracellular adenine nucleotides. The sequence is that of Adenosine kinase from Homo sapiens (Human).